Here is a 297-residue protein sequence, read N- to C-terminus: Mitochondrial ornithine transporter 1 (297 aa).

Solcar repeat units lie at residues 15-97, 102-205, and 212-292; these read GSPA…LKLT, DPTL…FKKN, and KPHF…FRET. 6 helical membrane-spanning segments follow: residues 18–38, 72–91, 107–127, 184–204, 215–235, and 264–285; these read ASTF…GYPL, GLTL…FTVY, YFIS…PFEY, HLTR…TFKK, FAYA…VFPV, and IYRG…NFTL.

Belongs to the mitochondrial carrier (TC 2.A.29) family.

It localises to the mitochondrion inner membrane. In terms of biological role, required for arginine biosynthesis. Transports ornithine synthesized from glutamate in the mitochondrial matrix to the cytosol, where it is converted to arginine. The chain is Mitochondrial ornithine transporter 1 from Schizosaccharomyces pombe (strain 972 / ATCC 24843) (Fission yeast).